The primary structure comprises 312 residues: Dihydroorotate dehydrogenase B (NAD(+)), catalytic subunit (312 aa).

FMN-binding positions include serine 23 and 47–48 (KA). Residues lysine 47 and 71–75 (NAIGL) each bind substrate. Positions 102 and 130 each coordinate FMN. Position 130 (asparagine 130) interacts with substrate. Cysteine 133 serves as the catalytic Nucleophile. Positions 168 and 194 each coordinate FMN. Residue 195–196 (NT) coordinates substrate. Residues glycine 220, 246 to 247 (GG), and 268 to 269 (GT) each bind FMN.

Belongs to the dihydroorotate dehydrogenase family. Type 1 subfamily. In terms of assembly, heterotetramer of 2 PyrK and 2 PyrD type B subunits. It depends on FMN as a cofactor.

The protein resides in the cytoplasm. The enzyme catalyses (S)-dihydroorotate + NAD(+) = orotate + NADH + H(+). The protein operates within pyrimidine metabolism; UMP biosynthesis via de novo pathway; orotate from (S)-dihydroorotate (NAD(+) route): step 1/1. Catalyzes the conversion of dihydroorotate to orotate with NAD(+) as electron acceptor. This chain is Dihydroorotate dehydrogenase B (NAD(+)), catalytic subunit (pyrDB), found in Enterococcus faecalis (strain ATCC 47077 / OG1RF).